A 469-amino-acid polypeptide reads, in one-letter code: Citrate synthase, mitochondrial (469 aa).

The transit peptide at 1 to 28 (MAFFRTVTKLRSRLGQPPSLRDSVRCLQ) directs the protein to the mitochondrion. Residues histidine 304, histidine 350, and aspartate 405 contribute to the active site.

This sequence belongs to the citrate synthase family. In terms of assembly, homodimer.

The protein resides in the mitochondrion matrix. The enzyme catalyses oxaloacetate + acetyl-CoA + H2O = citrate + CoA + H(+). It functions in the pathway carbohydrate metabolism; tricarboxylic acid cycle; isocitrate from oxaloacetate: step 1/2. The polypeptide is Citrate synthase, mitochondrial (MCSI) (Fragaria ananassa (Strawberry)).